A 294-amino-acid chain; its full sequence is Diaminopimelate epimerase (294 aa).

Positions 11 and 78 each coordinate substrate. Catalysis depends on cysteine 87, which acts as the Proton donor. Residues glycine 88–asparagine 89, asparagine 167, asparagine 203, and glutamate 221–arginine 222 each bind substrate. The Proton acceptor role is filled by cysteine 230. Glycine 231 to threonine 232 serves as a coordination point for substrate.

It belongs to the diaminopimelate epimerase family. Homodimer.

Its subcellular location is the cytoplasm. It catalyses the reaction (2S,6S)-2,6-diaminopimelate = meso-2,6-diaminopimelate. The protein operates within amino-acid biosynthesis; L-lysine biosynthesis via DAP pathway; DL-2,6-diaminopimelate from LL-2,6-diaminopimelate: step 1/1. Catalyzes the stereoinversion of LL-2,6-diaminopimelate (L,L-DAP) to meso-diaminopimelate (meso-DAP), a precursor of L-lysine and an essential component of the bacterial peptidoglycan. This chain is Diaminopimelate epimerase, found in Mycobacterium avium (strain 104).